The primary structure comprises 254 residues: AA9 family lytic polysaccharide monooxygenase A (254 aa).

A signal peptide spans Met-1–Ala-19. His-20 serves as a coordination point for Cu(2+). His-20 bears the Methylhistidine mark. Val-28 is a (1,4-beta-D-glucosyl)n binding site. Asn-52 carries an N-linked (GlcNAc...) asparagine glycan. A disulfide bond links Cys-60 and Cys-186. Residues Val-66, Val-67, Asp-77, and Asn-86 each contribute to the (1,4-beta-D-glucosyl)n site. Residue His-97 coordinates Cu(2+). An N-linked (GlcNAc...) asparagine glycan is attached at Asn-129. Val-148 and Arg-159 together coordinate (1,4-beta-D-glucosyl)n. The O2 site is built by His-166 and Gln-181. A Cu(2+)-binding site is contributed by Tyr-183.

This sequence belongs to the polysaccharide monooxygenase AA9 family. Cu(2+) is required as a cofactor. The catalytically essential N-terminal histidine His-20 is post-translationally modified by methylation to prevent protonation of the histidine side chain, and protect the critical active site of the enzyme from oxidative damage.

Its subcellular location is the secreted. The enzyme catalyses [(1-&gt;4)-beta-D-glucosyl]n+m + reduced acceptor + O2 = 4-dehydro-beta-D-glucosyl-[(1-&gt;4)-beta-D-glucosyl]n-1 + [(1-&gt;4)-beta-D-glucosyl]m + acceptor + H2O.. With respect to regulation, the polyphenol cinnamtannin B1 contained in methanolic extract of Cinnamomum cassia (cinnamon) acts as an inhibitor of catalytic activity. In terms of biological role, lytic polysaccharide monooxygenase (LPMO) that depolymerizes crystalline and amorphous polysaccharides via the oxidation of scissile alpha- or beta-(1-4)-glycosidic bonds, yielding C1 or C4 oxidation product. Catalysis by LPMOs requires the reduction of the active-site copper from Cu(II) to Cu(I) by a reducing agent and H(2)O(2) or O(2) as a cosubstrate. Is able to cleave phosphoric acid swollen cellulose (PASC) in the presence of a reducing agent, yielding a range of cellooligosaccharides dominated by cellobiose and cellotriose. Activity is less sensitive to the reducing agent potential when cleaving xylan, suggesting that distinct catalytic mechanisms exist for xylan and glucan cleavage. The chain is AA9 family lytic polysaccharide monooxygenase A from Panus similis (Lentinoid fungus).